Here is a 242-residue protein sequence, read N- to C-terminus: Type III pantothenate kinase (242 aa).

Residue 5–12 (DLGNTRLK) coordinates ATP. Substrate is bound by residues tyrosine 94 and 100-103 (GCDR). The active-site Proton acceptor is aspartate 102. Residue threonine 124 coordinates ATP. Threonine 175 serves as a coordination point for substrate.

The protein belongs to the type III pantothenate kinase family. In terms of assembly, homodimer. It depends on NH4(+) as a cofactor. K(+) is required as a cofactor.

It localises to the cytoplasm. The catalysed reaction is (R)-pantothenate + ATP = (R)-4'-phosphopantothenate + ADP + H(+). It functions in the pathway cofactor biosynthesis; coenzyme A biosynthesis; CoA from (R)-pantothenate: step 1/5. Functionally, catalyzes the phosphorylation of pantothenate (Pan), the first step in CoA biosynthesis. The protein is Type III pantothenate kinase of Psychrobacter arcticus (strain DSM 17307 / VKM B-2377 / 273-4).